The primary structure comprises 354 residues: Phosphate acyltransferase (354 aa).

Belongs to the PlsX family. As to quaternary structure, homodimer. Probably interacts with PlsY.

It is found in the cytoplasm. It carries out the reaction a fatty acyl-[ACP] + phosphate = an acyl phosphate + holo-[ACP]. The protein operates within lipid metabolism; phospholipid metabolism. Functionally, catalyzes the reversible formation of acyl-phosphate (acyl-PO(4)) from acyl-[acyl-carrier-protein] (acyl-ACP). This enzyme utilizes acyl-ACP as fatty acyl donor, but not acyl-CoA. The protein is Phosphate acyltransferase of Ralstonia nicotianae (strain ATCC BAA-1114 / GMI1000) (Ralstonia solanacearum).